Consider the following 274-residue polypeptide: 2,3,4,5-tetrahydropyridine-2,6-dicarboxylate N-succinyltransferase (274 aa).

Arg-104 and Asp-141 together coordinate substrate.

It belongs to the transferase hexapeptide repeat family. In terms of assembly, homotrimer.

It localises to the cytoplasm. The enzyme catalyses (S)-2,3,4,5-tetrahydrodipicolinate + succinyl-CoA + H2O = (S)-2-succinylamino-6-oxoheptanedioate + CoA. Its pathway is amino-acid biosynthesis; L-lysine biosynthesis via DAP pathway; LL-2,6-diaminopimelate from (S)-tetrahydrodipicolinate (succinylase route): step 1/3. This Yersinia pestis protein is 2,3,4,5-tetrahydropyridine-2,6-dicarboxylate N-succinyltransferase.